The primary structure comprises 300 residues: Ribosomal protein L11 methyltransferase (300 aa).

The S-adenosyl-L-methionine site is built by Thr152, Gly173, Asp195, and Asn234.

It belongs to the methyltransferase superfamily. PrmA family.

It localises to the cytoplasm. It catalyses the reaction L-lysyl-[protein] + 3 S-adenosyl-L-methionine = N(6),N(6),N(6)-trimethyl-L-lysyl-[protein] + 3 S-adenosyl-L-homocysteine + 3 H(+). Functionally, methylates ribosomal protein L11. The chain is Ribosomal protein L11 methyltransferase from Burkholderia pseudomallei (strain K96243).